We begin with the raw amino-acid sequence, 256 residues long: MEKKMIPAERQKTLLNLISKQSVISINNLVNILGVSHMTVRRDIQKLEEDGKVISVSGGVQLLERLSSEPTHDDKSLLATTEKTAISKKAVELIQEHSTIYLDAGTTTLEIAKQIANRNDLLVITNDFVIAHYLMVNSQCNIMHTGGLINKSNRSSVGEFAAQFLHQISVDIAFISTSSWNLKGLTTPDEQKIPVKKAIIQFSQKNILVTDSSKYGKVATFLLYPLSSLDTIICDKGLPENAQARIAEMNVELFLV.

Residues 7-62 (PAERQKTLLNLISKQSVISINNLVNILGVSHMTVRRDIQKLEEDGKVISVSGGVQL) enclose the HTH deoR-type domain. The segment at residues 24 to 43 (ISINNLVNILGVSHMTVRRD) is a DNA-binding region (H-T-H motif).

This is an uncharacterized protein from Haemophilus influenzae (strain ATCC 51907 / DSM 11121 / KW20 / Rd).